The sequence spans 295 residues: Indole-3-glycerol phosphate synthase (295 aa).

The protein belongs to the TrpC family.

It catalyses the reaction 1-(2-carboxyphenylamino)-1-deoxy-D-ribulose 5-phosphate + H(+) = (1S,2R)-1-C-(indol-3-yl)glycerol 3-phosphate + CO2 + H2O. It participates in amino-acid biosynthesis; L-tryptophan biosynthesis; L-tryptophan from chorismate: step 4/5. The sequence is that of Indole-3-glycerol phosphate synthase from Prochlorococcus marinus (strain AS9601).